Here is a 462-residue protein sequence, read N- to C-terminus: NAD-capped RNA hydrolase NUDT12 (462 aa).

3 ANK repeats span residues 11-40 (EIVTQFHCSAAEGDIAKLTGILSHSPSLLN), 45-74 (NGWTALMYAARNGHPEIVQFLLEKGCDRSI), and 78-98 (SRQTALDIAVFWGYKHIANLL). K185 bears the N6-succinyllysine mark. 2 residues coordinate Zn(2+): C284 and C287. K292 is subject to N6-succinyllysine. 2 residues coordinate Zn(2+): C302 and C307. Substrate-binding positions include Y318, 354-356 (AGF), E370, E374, and E415. Residues 319 to 453 (PRVDPVVIMQ…SRAIAHQLIK (135 aa)) form the Nudix hydrolase domain. The Mg(2+) site is built by A354, E370, E374, and E415. A Nudix box motif is present at residues 355 to 376 (GFIEPGETIEDAVRREVEEESG). The Microbody targeting signal signature appears at 460–462 (PNL).

This sequence belongs to the Nudix hydrolase family. NudC subfamily. In terms of assembly, homodimer. Homodimerization is essential for its catalytic activity and protein stability. Interacts (via ANK repeats) with BLMH. The cofactor is Mg(2+). Zn(2+) serves as cofactor.

The protein resides in the cytoplasm. It is found in the peroxisome. The protein localises to the cytoplasmic granule. The catalysed reaction is a 5'-end NAD(+)-phospho-ribonucleoside in mRNA + H2O = a 5'-end phospho-adenosine-phospho-ribonucleoside in mRNA + beta-nicotinamide D-ribonucleotide + 2 H(+). It carries out the reaction NAD(+) + H2O = beta-nicotinamide D-ribonucleotide + AMP + 2 H(+). The enzyme catalyses NADH + H2O = reduced beta-nicotinamide D-ribonucleotide + AMP + 2 H(+). It catalyses the reaction NADPH + H2O = reduced beta-nicotinamide D-ribonucleotide + adenosine 2',5'-bisphosphate + 2 H(+). In terms of biological role, mRNA decapping enzyme that specifically removes the nicotinamide adenine dinucleotide (NAD) cap from a subset of mRNAs by hydrolyzing the diphosphate linkage to produce nicotinamide mononucleotide (NMN) and 5' monophosphate mRNA. The NAD-cap is present at the 5'-end of some RNAs; in contrast to the canonical N7 methylguanosine (m7G) cap, the NAD cap promotes mRNA decay. Preferentially acts on NAD-capped transcripts in response to nutrient stress. Also acts on free nicotinamide adenine dinucleotide molecules: hydrolyzes NAD(H) into NMN(H) and AMP, and NADPH into NMNH and 2',5'-ADP. May act to regulate the concentration of peroxisomal nicotinamide nucleotide cofactors required for oxidative metabolism in this organelle. Regulates the levels of circadian clock components PER1, PER2, PER3 and CRY2 in the liver. This chain is NAD-capped RNA hydrolase NUDT12, found in Pongo abelii (Sumatran orangutan).